A 245-amino-acid chain; its full sequence is Large ribosomal subunit protein uL2 (245 aa).

Positions 196 to 226 (SPYAHPHGGGSHQKGGTPVSKTAPPGQKVGF) are disordered.

This sequence belongs to the universal ribosomal protein uL2 family. As to quaternary structure, part of the 50S ribosomal subunit. Forms a bridge to the 30S subunit in the 70S ribosome.

Its function is as follows. One of the primary rRNA binding proteins. Required for association of the 30S and 50S subunits to form the 70S ribosome, for tRNA binding and peptide bond formation. It has been suggested to have peptidyltransferase activity; this is somewhat controversial. Makes several contacts with the 16S rRNA in the 70S ribosome. The sequence is that of Large ribosomal subunit protein uL2 from Pyrobaculum neutrophilum (strain DSM 2338 / JCM 9278 / NBRC 100436 / V24Sta) (Thermoproteus neutrophilus).